A 376-amino-acid polypeptide reads, in one-letter code: Glutamate 5-kinase (376 aa).

Lysine 15 lines the ATP pocket. Substrate is bound by residues serine 55, aspartate 142, and asparagine 154. Residues 174–175 (TD) and 216–222 (TGGMATK) contribute to the ATP site. A PUA domain is found at 281 to 359 (AGKVLVDAGA…AEIEQLLGYR (79 aa)).

It belongs to the glutamate 5-kinase family.

It localises to the cytoplasm. It catalyses the reaction L-glutamate + ATP = L-glutamyl 5-phosphate + ADP. The protein operates within amino-acid biosynthesis; L-proline biosynthesis; L-glutamate 5-semialdehyde from L-glutamate: step 1/2. Catalyzes the transfer of a phosphate group to glutamate to form L-glutamate 5-phosphate. This Trichlorobacter lovleyi (strain ATCC BAA-1151 / DSM 17278 / SZ) (Geobacter lovleyi) protein is Glutamate 5-kinase.